The sequence spans 201 residues: Protocatechuate 3,4-dioxygenase alpha chain (201 aa).

Arginine 134 provides a ligand contact to 3,4-dihydroxybenzoate.

The protein belongs to the intradiol ring-cleavage dioxygenase family. As to quaternary structure, the enzyme is an oligomer of 12 copies of the alpha and beta chains. The cofactor is Fe(3+).

The catalysed reaction is 3,4-dihydroxybenzoate + O2 = 3-carboxy-cis,cis-muconate + 2 H(+). The protein operates within aromatic compound metabolism; beta-ketoadipate pathway; 3-carboxy-cis,cis-muconate from 3,4-dihydroxybenzoate: step 1/1. Its function is as follows. Plays an essential role in the utilization of numerous aromatic and hydroaromatic compounds via the beta-ketoadipate pathway. The chain is Protocatechuate 3,4-dioxygenase alpha chain (pcaG) from Pseudomonas putida (Arthrobacter siderocapsulatus).